A 91-amino-acid polypeptide reads, in one-letter code: Small ribosomal subunit protein bS20 (91 aa).

The segment covering 1–18 has biased composition (basic and acidic residues); sequence MPLHKSAEKRLRQSEKRN. Positions 1 to 24 are disordered; sequence MPLHKSAEKRLRQSEKRNVRNRAR.

It belongs to the bacterial ribosomal protein bS20 family.

In terms of biological role, binds directly to 16S ribosomal RNA. The chain is Small ribosomal subunit protein bS20 from Chlorobium phaeobacteroides (strain DSM 266 / SMG 266 / 2430).